The following is a 316-amino-acid chain: MLNLRVVYLGTPQFAATVLETLVDARIHVVGVVTRADKPQKRSSKPIASPVKQLALSKNIPLLQPTKTTDPAFLAQLREWQADVFVVVAYGVILKQELLDIPKYGCYNLHAGLLPAYRGAAPIQRCIIAGETLSGNTVIRMDAGMDTGDIANVNHVAIGEDMTAGELAEALAGSGGELILKTLQEIEAGTVRHIPQDSAKATLAPKLTKEEGLVKWDAPASQVYAHIRGVSPAPGAWTRFLSQGKEPRRLGILSARMESSSGSHSPGEVLGVSGEDLLVACRQGVLRLCIVQPEGKVFMKAKDFFNGQSRSVALLF.

112–115 contacts (6S)-5,6,7,8-tetrahydrofolate; the sequence is GLLP.

This sequence belongs to the Fmt family.

The catalysed reaction is L-methionyl-tRNA(fMet) + (6R)-10-formyltetrahydrofolate = N-formyl-L-methionyl-tRNA(fMet) + (6S)-5,6,7,8-tetrahydrofolate + H(+). In terms of biological role, attaches a formyl group to the free amino group of methionyl-tRNA(fMet). The formyl group appears to play a dual role in the initiator identity of N-formylmethionyl-tRNA by promoting its recognition by IF2 and preventing the misappropriation of this tRNA by the elongation apparatus. This is Methionyl-tRNA formyltransferase from Chlamydia muridarum (strain MoPn / Nigg).